The chain runs to 561 residues: Carbohydrate sulfotransferase 15 (561 aa).

Over 1 to 80 (MRHCINCCVQ…FLRFRKGKRC (80 aa)) the chain is Cytoplasmic. The helical; Signal-anchor for type II membrane protein transmembrane segment at 81–101 (SLVFGLIIMTLVMASYILSGA) threads the bilayer. Over 102-561 (HQELLISSPF…DDEAFAWKTT (460 aa)) the chain is Lumenal. 263–267 (KCGTT) is a binding site for 3'-phosphoadenylyl sulfate. N-linked (GlcNAc...) asparagine glycosylation is present at N364. 2 residues coordinate 3'-phosphoadenylyl sulfate: R392 and S400.

The protein belongs to the sulfotransferase 1 family. In terms of assembly, homodimer; disulfide-linked (Potential). The relevance of homodimerization is however unsure. May interact with phosphorylated proteins in resting B-cells, including HCK. A divalent metal cation is required as a cofactor. It depends on glutathione as a cofactor. Post-translationally, glycosylated.

Its subcellular location is the golgi apparatus membrane. It carries out the reaction dermatan 4'-sulfate + n 3'-phosphoadenylyl sulfate = dermatan 4',6'-bissulfate + n adenosine 3',5'-bisphosphate + n H(+). The catalysed reaction is chondroitin 4'-sulfate + n 3'-phosphoadenylyl sulfate = chondroitin 4',6'-bissulfate + n adenosine 3',5'-bisphosphate + n H(+). Inhibited by phenyl beta-GalNAc(4,6-SO(4)). Its function is as follows. Sulfotransferase that transfers sulfate from 3'-phosphoadenosine 5'-phosphosulfate (PAPS) to the C-6 hydroxyl group of the GalNAc 4-sulfate residue of chondroitin sulfate A and forms chondroitin sulfate E containing GlcA-GalNAc(4,6-SO(4)) repeating units. It also transfers sulfate to a unique non-reducing terminal sequence, GalNAc(4SO4)-GlcA(2SO4)-GalNAc(6SO4), to yield a highly sulfated structure similar to the structure found in thrombomodulin chondroitin sulfate. May also act as a B-cell receptor involved in BCR ligation-mediated early activation that mediate regulatory signals key to B-cell development and/or regulation of B-cell-specific RAG expression; however such results are unclear in vivo. This is Carbohydrate sulfotransferase 15 (Chst15) from Mus musculus (Mouse).